The following is a 331-amino-acid chain: Apoptosis inhibitor UL38 (331 aa).

Positions 246–309 (TGAQPSHAPA…ELSSSPPLPP (64 aa)) are disordered. The segment covering 275-304 (AAAATPPSSAATTPPSSVVPASVESELSSS) has biased composition (low complexity).

The protein belongs to the beta-herpesvirinae UL38 protein family. As to quaternary structure, interacts with host MDM2; this interaction leads to the stabilization of host TP53. Interacts with host TSC2; this interaction prevents host cell stress responses. Interacts with host USP24.

The protein resides in the host cytoplasm. Its subcellular location is the host nucleus. In terms of biological role, plays a role in the inhibition of host apoptosis to facilitate efficient viral replication. Promotes stabilization and inactivation of host TP53 through interaction with host MDM2. Induces host mTORC1 activation by antagonizing the ability of host TSC1/2 to negatively regulate mTORC1. Thus, inhibits a growth regulatory pathway to facilitate viral replication. Prevents premature cell host cell death by blocking host ubiquitin-specific protease 24/USP24-mediated autophagic ferritin degradation in lysosomes thus maintaining lysosome integrity and cellular viability. Involved in the activation of host ENO2 leading to enhanced glycolysis and UDP-sugar metabolism in order to enable the expression of viral glycoproteins. The protein is Apoptosis inhibitor UL38 (UL38) of Human cytomegalovirus (strain Merlin) (HHV-5).